We begin with the raw amino-acid sequence, 662 residues long: UvrABC system protein B (662 aa).

Positions 31–188 (DNIEGGEKAQ…NDLVDIQFER (158 aa)) constitute a Helicase ATP-binding domain. 44-51 (GATGTGKT) lines the ATP pocket. The Beta-hairpin signature appears at 97 to 120 (YYDYYQPEAYVPSSDTYIEKDSSV). The region spanning 435–601 (QIDDLLGEIN…TIKKEIRDLI (167 aa)) is the Helicase C-terminal domain. Residues 626 to 661 (KDMIKKLEGQMQEAAGLLDFELAAQIRDMILEIKAM) enclose the UVR domain.

Belongs to the UvrB family. As to quaternary structure, forms a heterotetramer with UvrA during the search for lesions. Interacts with UvrC in an incision complex.

It localises to the cytoplasm. In terms of biological role, the UvrABC repair system catalyzes the recognition and processing of DNA lesions. A damage recognition complex composed of 2 UvrA and 2 UvrB subunits scans DNA for abnormalities. Upon binding of the UvrA(2)B(2) complex to a putative damaged site, the DNA wraps around one UvrB monomer. DNA wrap is dependent on ATP binding by UvrB and probably causes local melting of the DNA helix, facilitating insertion of UvrB beta-hairpin between the DNA strands. Then UvrB probes one DNA strand for the presence of a lesion. If a lesion is found the UvrA subunits dissociate and the UvrB-DNA preincision complex is formed. This complex is subsequently bound by UvrC and the second UvrB is released. If no lesion is found, the DNA wraps around the other UvrB subunit that will check the other stand for damage. The protein is UvrABC system protein B of Streptococcus sanguinis (strain SK36).